Here is a 322-residue protein sequence, read N- to C-terminus: Fructose-1,6-bisphosphatase class 1 (322 aa).

Mg(2+) contacts are provided by Glu84, Asp103, Leu105, and Asp106. Substrate is bound by residues 106-109 (DGSS), Asn198, and Lys264. Residue Glu270 coordinates Mg(2+).

The protein belongs to the FBPase class 1 family. Homotetramer. Mg(2+) serves as cofactor.

The protein resides in the cytoplasm. It catalyses the reaction beta-D-fructose 1,6-bisphosphate + H2O = beta-D-fructose 6-phosphate + phosphate. It participates in carbohydrate biosynthesis; gluconeogenesis. The polypeptide is Fructose-1,6-bisphosphatase class 1 (Colwellia psychrerythraea (strain 34H / ATCC BAA-681) (Vibrio psychroerythus)).